Here is a 402-residue protein sequence, read N- to C-terminus: Speedy protein E2 (402 aa).

The tract at residues 1 to 89 is disordered; the sequence is MDRTETRFRK…EEPEKELAPE (89 aa). Over residues 16 to 39 the composition is skewed to polar residues; the sequence is GKITTSRQPHPQNEQSPQRSTSGY. Acidic residues predominate over residues 76–89; the sequence is DESEEEPEKELAPE.

The protein belongs to the Speedy/Ringo family.

This chain is Speedy protein E2 (SPDYE2), found in Homo sapiens (Human).